A 156-amino-acid chain; its full sequence is Cytochrome c-type biogenesis protein CcmE 2 (156 aa).

Residues 1–8 (MNPQRRRR) are Cytoplasmic-facing. Residues 9-29 (LWLVLALVLAGGLATTLVAMA) form a helical; Signal-anchor for type II membrane protein membrane-spanning segment. Residues 30 to 156 (LQRNVAYLYT…AAAGQVGERQ (127 aa)) are Periplasmic-facing. Positions 123 and 127 each coordinate heme. Positions 136-156 (MGSAHRKHDVPAAAGQVGERQ) are disordered.

The protein belongs to the CcmE/CycJ family.

It is found in the cell inner membrane. Its function is as follows. Heme chaperone required for the biogenesis of c-type cytochromes. Transiently binds heme delivered by CcmC and transfers the heme to apo-cytochromes in a process facilitated by CcmF and CcmH. This is Cytochrome c-type biogenesis protein CcmE 2 from Xanthomonas axonopodis pv. citri (strain 306).